The sequence spans 121 residues: Regulator of ribonuclease activity B (121 aa).

Belongs to the RraB family. As to quaternary structure, interacts with the C-terminal region of Rne.

It is found in the cytoplasm. Functionally, globally modulates RNA abundance by binding to RNase E (Rne) and regulating its endonucleolytic activity. Can modulate Rne action in a substrate-dependent manner by altering the composition of the degradosome. The protein is Regulator of ribonuclease activity B of Psychromonas ingrahamii (strain DSM 17664 / CCUG 51855 / 37).